A 380-amino-acid chain; its full sequence is 5-amino-6-(D-ribitylamino)uracil--L-tyrosine 4-hydroxyphenyl transferase (380 aa).

Residues 56-303 (VTYIINRNIN…GAVARIYLGN (248 aa)) form the Radical SAM core domain. [4Fe-4S] cluster is bound by residues Cys70, Cys74, and Cys77.

It belongs to the radical SAM superfamily. CofH family. As to quaternary structure, consists of two subunits, CofG and CofH. It depends on [4Fe-4S] cluster as a cofactor.

The catalysed reaction is 5-amino-6-(D-ribitylamino)uracil + L-tyrosine + S-adenosyl-L-methionine = 5-amino-5-(4-hydroxybenzyl)-6-(D-ribitylimino)-5,6-dihydrouracil + 2-iminoacetate + 5'-deoxyadenosine + L-methionine + H(+). It participates in cofactor biosynthesis; coenzyme F0 biosynthesis. In terms of biological role, catalyzes the radical-mediated synthesis of 5-amino-5-(4-hydroxybenzyl)-6-(D-ribitylimino)-5,6-dihydrouracil from 5-amino-6-(D-ribitylamino)uracil and L-tyrosine. In Nostoc punctiforme (strain ATCC 29133 / PCC 73102), this protein is 5-amino-6-(D-ribitylamino)uracil--L-tyrosine 4-hydroxyphenyl transferase.